A 155-amino-acid polypeptide reads, in one-letter code: Small ribosomal subunit protein uS7 (155 aa).

It belongs to the universal ribosomal protein uS7 family. In terms of assembly, part of the 30S ribosomal subunit. Contacts proteins S9 and S11.

One of the primary rRNA binding proteins, it binds directly to 16S rRNA where it nucleates assembly of the head domain of the 30S subunit. Is located at the subunit interface close to the decoding center, probably blocks exit of the E-site tRNA. In Chlorobium luteolum (strain DSM 273 / BCRC 81028 / 2530) (Pelodictyon luteolum), this protein is Small ribosomal subunit protein uS7.